Here is a 116-residue protein sequence, read N- to C-terminus: Iron-sulfur cluster insertion protein ErpA (116 aa).

Residues Cys44, Cys108, and Cys110 each contribute to the iron-sulfur cluster site.

It belongs to the HesB/IscA family. As to quaternary structure, homodimer. It depends on iron-sulfur cluster as a cofactor.

Functionally, required for insertion of 4Fe-4S clusters for at least IspG. The protein is Iron-sulfur cluster insertion protein ErpA of Pseudomonas entomophila (strain L48).